A 255-amino-acid chain; its full sequence is Putative cysteine-rich repeat secretory protein 32 (255 aa).

The signal sequence occupies residues 1-28; that stretch reads MYSSYSLFKCLVCFYILGIQVLIHSVSS. Gnk2-homologous domains are found at residues 35-136 and 143-252; these read YLHH…TINS and YENT…LYPF.

The protein belongs to the cysteine-rich repeat secretory protein family.

The protein resides in the secreted. This is Putative cysteine-rich repeat secretory protein 32 (CRRSP32) from Arabidopsis thaliana (Mouse-ear cress).